Consider the following 132-residue polypeptide: Small ribosomal subunit protein uS8 (132 aa).

The protein belongs to the universal ribosomal protein uS8 family. In terms of assembly, part of the 30S ribosomal subunit. Contacts proteins S5 and S12.

One of the primary rRNA binding proteins, it binds directly to 16S rRNA central domain where it helps coordinate assembly of the platform of the 30S subunit. In Ehrlichia canis (strain Jake), this protein is Small ribosomal subunit protein uS8.